A 368-amino-acid chain; its full sequence is Cobalt-precorrin-5B C(1)-methyltransferase (368 aa).

Belongs to the CbiD family.

It catalyses the reaction Co-precorrin-5B + S-adenosyl-L-methionine = Co-precorrin-6A + S-adenosyl-L-homocysteine. It participates in cofactor biosynthesis; adenosylcobalamin biosynthesis; cob(II)yrinate a,c-diamide from sirohydrochlorin (anaerobic route): step 6/10. Functionally, catalyzes the methylation of C-1 in cobalt-precorrin-5B to form cobalt-precorrin-6A. This is Cobalt-precorrin-5B C(1)-methyltransferase from Brucella abortus (strain S19).